Reading from the N-terminus, the 143-residue chain is Peptide methionine sulfoxide reductase MsrB (143 aa).

The 124-residue stretch at 16–139 (DAELRRRLTP…NSAALNFESR (124 aa)) folds into the MsrB domain. Positions 55, 58, 104, and 107 each coordinate Zn(2+). C128 (nucleophile) is an active-site residue.

It belongs to the MsrB Met sulfoxide reductase family. Zn(2+) serves as cofactor.

It catalyses the reaction L-methionyl-[protein] + [thioredoxin]-disulfide + H2O = L-methionyl-(R)-S-oxide-[protein] + [thioredoxin]-dithiol. The polypeptide is Peptide methionine sulfoxide reductase MsrB (Burkholderia ambifaria (strain MC40-6)).